A 565-amino-acid chain; its full sequence is O-fucosyltransferase 7 (565 aa).

The helical; Signal-anchor for type II membrane protein transmembrane segment at 17 to 37 (VLIWAICVMTLLCFLTVHIYV) threads the bilayer. Residues N62, N73, N104, N124, and N190 are each glycosylated (N-linked (GlcNAc...) asparagine). 327-329 (HLR) is a binding site for substrate. A glycan (N-linked (GlcNAc...) asparagine) is linked at N441. The tract at residues 515-565 (NEIHKTRQGSPRRRKGPASGTKGLERHRSEESFYENPLPDCLCQRDPSKAR) is disordered. Over residues 520 to 530 (TRQGSPRRRKG) the composition is skewed to basic residues.

This sequence belongs to the glycosyltransferase GT106 family.

Its subcellular location is the membrane. It participates in glycan metabolism. The sequence is that of O-fucosyltransferase 7 from Arabidopsis thaliana (Mouse-ear cress).